Reading from the N-terminus, the 202-residue chain is LexA repressor (202 aa).

The H-T-H motif DNA-binding region spans 29-49 (VREICEATGLKSTSTVHGHLT). Residues serine 126 and lysine 163 each act as for autocatalytic cleavage activity in the active site.

This sequence belongs to the peptidase S24 family. In terms of assembly, homodimer.

The enzyme catalyses Hydrolysis of Ala-|-Gly bond in repressor LexA.. Functionally, represses a number of genes involved in the response to DNA damage (SOS response), including recA and lexA. In the presence of single-stranded DNA, RecA interacts with LexA causing an autocatalytic cleavage which disrupts the DNA-binding part of LexA, leading to derepression of the SOS regulon and eventually DNA repair. This is LexA repressor from Caldicellulosiruptor saccharolyticus (strain ATCC 43494 / DSM 8903 / Tp8T 6331).